The chain runs to 145 residues: MIALIQRVSRASVTVEDEVTGEIGPGLLVLLGVEKDDDEQKANRLCERVLGYRIFSDAEGKMNLNVQQAGGSVLVVSQFTLAADTERGMRPSFSKGAAPDRAEALYEYFVARCRQQEMNTQTGRFAADMQVSLVNDGPVTFWLQV.

Positions 137–138 match the Gly-cisPro motif, important for rejection of L-amino acids motif; the sequence is GP.

Belongs to the DTD family. As to quaternary structure, homodimer.

It is found in the cytoplasm. It carries out the reaction glycyl-tRNA(Ala) + H2O = tRNA(Ala) + glycine + H(+). The enzyme catalyses a D-aminoacyl-tRNA + H2O = a tRNA + a D-alpha-amino acid + H(+). In terms of biological role, an aminoacyl-tRNA editing enzyme that deacylates mischarged D-aminoacyl-tRNAs. Also deacylates mischarged glycyl-tRNA(Ala), protecting cells against glycine mischarging by AlaRS. Acts via tRNA-based rather than protein-based catalysis; rejects L-amino acids rather than detecting D-amino acids in the active site. By recycling D-aminoacyl-tRNA to D-amino acids and free tRNA molecules, this enzyme counteracts the toxicity associated with the formation of D-aminoacyl-tRNA entities in vivo and helps enforce protein L-homochirality. This chain is D-aminoacyl-tRNA deacylase, found in Klebsiella pneumoniae (strain 342).